Reading from the N-terminus, the 394-residue chain is Probable peptidoglycan glycosyltransferase FtsW (394 aa).

Topologically, residues methionine 1–alanine 27 are cytoplasmic. Residues leucine 28 to isoleucine 48 form a helical membrane-spanning segment. At proline 49–alanine 66 the chain is on the periplasmic side. A helical transmembrane segment spans residues isoleucine 67–tryptophan 87. The Cytoplasmic segment spans residues glutamate 88–lysine 93. Residues isoleucine 94–glycine 114 form a helical membrane-spanning segment. At alanine 115 to serine 120 the chain is on the periplasmic side. The helical transmembrane segment at leucine 121 to alanine 141 threads the bilayer. Residues serine 142–histidine 155 lie on the Cytoplasmic side of the membrane. 2 helical membrane-spanning segments follow: residues valine 156–proline 176 and aspartate 177–alanine 197. Residue lysine 198 is a topological domain, cytoplasmic. A helical membrane pass occupies residues isoleucine 199–threonine 219. The Periplasmic segment spans residues alanine 220 to aspartate 277. Residues phenylalanine 278–leucine 298 traverse the membrane as a helical segment. The Cytoplasmic segment spans residues leucine 299 to glycine 322. Residues phenylalanine 323 to alanine 343 form a helical membrane-spanning segment. Over leucine 344 to threonine 353 the chain is Periplasmic. A helical transmembrane segment spans residues phenylalanine 354–leucine 374. Residues leucine 375–aspartate 394 are Cytoplasmic-facing.

It belongs to the SEDS family. FtsW subfamily.

It is found in the cell inner membrane. It carries out the reaction [GlcNAc-(1-&gt;4)-Mur2Ac(oyl-L-Ala-gamma-D-Glu-L-Lys-D-Ala-D-Ala)](n)-di-trans,octa-cis-undecaprenyl diphosphate + beta-D-GlcNAc-(1-&gt;4)-Mur2Ac(oyl-L-Ala-gamma-D-Glu-L-Lys-D-Ala-D-Ala)-di-trans,octa-cis-undecaprenyl diphosphate = [GlcNAc-(1-&gt;4)-Mur2Ac(oyl-L-Ala-gamma-D-Glu-L-Lys-D-Ala-D-Ala)](n+1)-di-trans,octa-cis-undecaprenyl diphosphate + di-trans,octa-cis-undecaprenyl diphosphate + H(+). It participates in cell wall biogenesis; peptidoglycan biosynthesis. Peptidoglycan polymerase that is essential for cell division. This is Probable peptidoglycan glycosyltransferase FtsW from Haemophilus influenzae (strain ATCC 51907 / DSM 11121 / KW20 / Rd).